The sequence spans 289 residues: Bifunctional aminodeoxychorismate lyase / D-amino acid transaminase (289 aa).

Arg50 is a binding site for pyridoxal 5'-phosphate. Residue Lys149 is modified to N6-(pyridoxal phosphate)lysine. Residues Tyr153, Thr216, and Thr217 each coordinate pyridoxal 5'-phosphate. Ser252 serves as a coordination point for 2-oxoglutarate. Ser253 provides a ligand contact to pyridoxal 5'-phosphate. Positions 254 and 255 each coordinate 2-oxoglutarate.

It belongs to the class-IV pyridoxal-phosphate-dependent aminotransferase family. As to quaternary structure, homodimer. Pyridoxal 5'-phosphate is required as a cofactor.

It catalyses the reaction 4-amino-4-deoxychorismate = 4-aminobenzoate + pyruvate + H(+). It carries out the reaction D-alanine + 2-oxoglutarate = D-glutamate + pyruvate. Its pathway is cofactor biosynthesis; tetrahydrofolate biosynthesis; 4-aminobenzoate from chorismate: step 2/2. It participates in cell wall biogenesis; peptidoglycan biosynthesis. Functionally, bifunctional enzyme that catalyzes two enzymatic reactions in biochemically unrelated pathways: acts as an aminodeoxychorismate (ADC) lyase (ADCL) in folate biosynthesis, converting 4-amino-4-deoxychorismate (ADC) to 4-aminobenzoate (PABA), and as a D-amino acid transaminase (DAAT) in peptidoglycan (PG) biosynthesis. DAAT activity is strictly restricted to D-alanine and D-glutamate. May function as a metabolic toggle that alternates between ADCL and DAAT activity, prioritizing the former over the latter in response to substrate accumulation. Bifunctionality of this enzyme provides a failsafe mechanism for a metabolic coupling between nucleic acid and cell wall biosynthesis that appears to ensure prioritization of PABA production over D-alanine/D-glutamate biosynthesis. The chain is Bifunctional aminodeoxychorismate lyase / D-amino acid transaminase from Mycobacterium tuberculosis (strain ATCC 25618 / H37Rv).